An 89-amino-acid chain; its full sequence is MNFKPLGQRVLVERLEEDTKTASGIIIPDNAKEKPLMGTVKALSEEVAKEGLLKAGSQVVFAKYSGTDVKLEGKEYLILKVEDLLGTIE.

It belongs to the GroES chaperonin family. As to quaternary structure, heptamer of 7 subunits arranged in a ring. Interacts with the chaperonin GroEL.

It is found in the cytoplasm. Together with the chaperonin GroEL, plays an essential role in assisting protein folding. The GroEL-GroES system forms a nano-cage that allows encapsulation of the non-native substrate proteins and provides a physical environment optimized to promote and accelerate protein folding. GroES binds to the apical surface of the GroEL ring, thereby capping the opening of the GroEL channel. This chain is Co-chaperonin GroES, found in Wolinella succinogenes (strain ATCC 29543 / DSM 1740 / CCUG 13145 / JCM 31913 / LMG 7466 / NCTC 11488 / FDC 602W) (Vibrio succinogenes).